Here is a 185-residue protein sequence, read N- to C-terminus: Ribose 1,5-bisphosphate phosphokinase PhnN (185 aa).

Residue 10 to 17 (GPSGSGKD) participates in ATP binding.

It belongs to the ribose 1,5-bisphosphokinase family.

It carries out the reaction alpha-D-ribose 1,5-bisphosphate + ATP = 5-phospho-alpha-D-ribose 1-diphosphate + ADP. Its pathway is metabolic intermediate biosynthesis; 5-phospho-alpha-D-ribose 1-diphosphate biosynthesis; 5-phospho-alpha-D-ribose 1-diphosphate from D-ribose 5-phosphate (route II): step 3/3. Catalyzes the phosphorylation of ribose 1,5-bisphosphate to 5-phospho-D-ribosyl alpha-1-diphosphate (PRPP). The chain is Ribose 1,5-bisphosphate phosphokinase PhnN from Pseudomonas paraeruginosa (strain DSM 24068 / PA7) (Pseudomonas aeruginosa (strain PA7)).